We begin with the raw amino-acid sequence, 156 residues long: Small ribosomal subunit protein uS7 (156 aa).

This sequence belongs to the universal ribosomal protein uS7 family. In terms of assembly, part of the 30S ribosomal subunit. Contacts proteins S9 and S11.

Functionally, one of the primary rRNA binding proteins, it binds directly to 16S rRNA where it nucleates assembly of the head domain of the 30S subunit. Is located at the subunit interface close to the decoding center, probably blocks exit of the E-site tRNA. The chain is Small ribosomal subunit protein uS7 from Geobacillus thermodenitrificans (strain NG80-2).